The sequence spans 308 residues: Glutamyl-Q tRNA(Asp) synthetase (308 aa).

Residues 19–23 (RFAPS) and Glu-55 each bind L-glutamate. A 'HIGH' region motif is present at residues 22-32 (PSPSGELHFGS). Cys-111, Cys-113, Tyr-125, and Cys-129 together coordinate Zn(2+). L-glutamate-binding residues include Tyr-182 and Arg-200. Residues 238 to 242 (KLSKQ) carry the 'KMSKS' region motif. Lys-241 provides a ligand contact to ATP.

This sequence belongs to the class-I aminoacyl-tRNA synthetase family. GluQ subfamily. Requires Zn(2+) as cofactor.

Its function is as follows. Catalyzes the tRNA-independent activation of glutamate in presence of ATP and the subsequent transfer of glutamate onto a tRNA(Asp). Glutamate is transferred on the 2-amino-5-(4,5-dihydroxy-2-cyclopenten-1-yl) moiety of the queuosine in the wobble position of the QUC anticodon. This is Glutamyl-Q tRNA(Asp) synthetase from Escherichia coli O157:H7.